Reading from the N-terminus, the 792-residue chain is Kinesin-associated protein 3 (792 aa).

Ser60 carries the post-translational modification Phosphoserine. Residues 103-119 (LSGKEKKEKSSKPKDPP) are compositionally biased toward basic and acidic residues. Positions 103 to 124 (LSGKEKKEKSSKPKDPPPFEGM) are disordered. ARM repeat units follow at residues 333–373 (FMEN…NLSF), 374–412 (DTGL…HISM), 494–533 (DGPT…NLTI), 578–620 (DDSC…QMVF), and 621–662 (HQAT…IIAE).

Heterotrimer of KIFAP3, KIF3A and KIF3B. Interacts with RAP1GDS1/SMG GDS. Interacts with SMC3 subunit of the cohesin complex. Post-translationally, phosphorylated on tyrosine residues by SRC in vitro; this reduces the binding affinity of the protein for RAP1GDS1.

Its function is as follows. Involved in tethering the chromosomes to the spindle pole and in chromosome movement. Binds to the tail domain of the KIF3A/KIF3B heterodimer to form a heterotrimeric KIF3 complex and may regulate the membrane binding of this complex. The sequence is that of Kinesin-associated protein 3 (KIFAP3) from Homo sapiens (Human).